The following is a 479-amino-acid chain: Anaerobic nitric oxide reductase flavorubredoxin (479 aa).

The zinc metallo-hydrolase stretch occupies residues 30–210 (LRGSSYNSYL…PFSRLVTPKI (181 aa)). Fe cation-binding residues include His79, Glu81, Asp83, His147, Asp166, and His227. The Flavodoxin-like domain maps to 254–393 (ITIFYDTMSN…LCREHGREIA (140 aa)). Residues 260-264 (TMSNN) and 342-369 (AFGS…EMSL) each bind FMN. Positions 423 to 474 (GPRMQCSVCQWIYDPAKGEPMQDVAPGTPWSEVPDNFLCPECSLGKDVFEEL) constitute a Rubredoxin-like domain. Residues Cys428, Cys431, Cys461, and Cys464 each contribute to the Fe cation site.

It in the N-terminal section; belongs to the zinc metallo-hydrolase group 3 family. In terms of assembly, homotetramer. Fe cation is required as a cofactor. The cofactor is FMN.

It localises to the cytoplasm. The protein operates within nitrogen metabolism; nitric oxide reduction. Its function is as follows. Anaerobic nitric oxide reductase; uses NADH to detoxify nitric oxide (NO), protecting several 4Fe-4S NO-sensitive enzymes. Has at least 2 reductase partners, only one of which (NorW, flavorubredoxin reductase) has been identified. NO probably binds to the di-iron center; electrons enter from the NorW at rubredoxin and are transferred sequentially to the FMN center and the di-iron center. Also able to function as an aerobic oxygen reductase. This chain is Anaerobic nitric oxide reductase flavorubredoxin, found in Shigella dysenteriae serotype 1 (strain Sd197).